A 289-amino-acid chain; its full sequence is Dehydrodolichyl diphosphate synthase 4 (289 aa).

Residues 2–22 traverse the membrane as a helical segment; sequence LSMLWFLLSLLSLLLLPCLRP.

The protein belongs to the UPP synthase family. The cofactor is Mg(2+).

Its subcellular location is the endoplasmic reticulum membrane. The protein operates within protein modification; protein glycosylation. In terms of biological role, catalyzes cis-prenyl chain elongation to produce the polyprenyl backbone of dolichol, a glycosyl carrier-lipid required for the biosynthesis of several classes of glycoprotein. The protein is Dehydrodolichyl diphosphate synthase 4 of Arabidopsis thaliana (Mouse-ear cress).